An 884-amino-acid polypeptide reads, in one-letter code: Alanine--tRNA ligase (884 aa).

Positions 570, 574, 676, and 680 each coordinate Zn(2+).

This sequence belongs to the class-II aminoacyl-tRNA synthetase family. The cofactor is Zn(2+).

It localises to the cytoplasm. It carries out the reaction tRNA(Ala) + L-alanine + ATP = L-alanyl-tRNA(Ala) + AMP + diphosphate. Its function is as follows. Catalyzes the attachment of alanine to tRNA(Ala) in a two-step reaction: alanine is first activated by ATP to form Ala-AMP and then transferred to the acceptor end of tRNA(Ala). Also edits incorrectly charged Ser-tRNA(Ala) and Gly-tRNA(Ala) via its editing domain. The protein is Alanine--tRNA ligase of Lawsonia intracellularis (strain PHE/MN1-00).